Consider the following 474-residue polypeptide: JmjC domain-containing protein F (474 aa).

The disordered stretch occupies residues 247 to 269; the sequence is KTKKQQQQQQTTTTTANNDNDNS. Over residues 251–261 the composition is skewed to low complexity; the sequence is QQQQQQTTTTT. One can recognise a JmjC domain in the interval 305–474; sequence AYLAQHGLIE…LSLSFWFIKK (170 aa).

The chain is JmjC domain-containing protein F (jcdF) from Dictyostelium discoideum (Social amoeba).